A 317-amino-acid chain; its full sequence is Testis-specific Y-encoded protein 1 (317 aa).

2 disordered regions span residues 1–39 (MSRPFASAPARGHRQGQEERERRSEEGGSVPGPRTFQVV) and 91–118 (DEEQEQRPSQELEEKTVEEQGQERPGGP). 2 stretches are compositionally biased toward basic and acidic residues: residues 15–26 (QGQEERERRSEE) and 95–112 (EQRPSQELEEKTVEEQGQ).

It belongs to the nucleosome assembly protein (NAP) family. Phosphorylated. In terms of tissue distribution, testis. Probably in spermatogonia.

The protein localises to the cytoplasm. It localises to the nucleus. Its function is as follows. May be involved in sperm differentiation and proliferation. The sequence is that of Testis-specific Y-encoded protein 1 (TSPY1) from Bos taurus (Bovine).